The primary structure comprises 375 residues: Zinc finger CCCH domain-containing protein 57 (375 aa).

5 consecutive C3H1-type zinc fingers follow at residues 42–70 (RHGE…HPHD), 87–115 (RIGQ…HPRN), 133–161 (RPNE…HPQT), 243–271 (RPGQ…HPRD), and 289–317 (RPGE…HPMR). The segment at 352–375 (SVEAKPTSLPETTSAKDTIVDAQH) is disordered.

It is found in the nucleus. This chain is Zinc finger CCCH domain-containing protein 57 (ZFN3), found in Arabidopsis thaliana (Mouse-ear cress).